We begin with the raw amino-acid sequence, 152 residues long: Deoxyuridine 5'-triphosphate nucleotidohydrolase (152 aa).

Substrate is bound by residues 71 to 73, Asn-84, 88 to 90, and Met-98; these read RSG and LID.

It belongs to the dUTPase family. Requires Mg(2+) as cofactor.

It carries out the reaction dUTP + H2O = dUMP + diphosphate + H(+). The protein operates within pyrimidine metabolism; dUMP biosynthesis; dUMP from dCTP (dUTP route): step 2/2. Functionally, this enzyme is involved in nucleotide metabolism: it produces dUMP, the immediate precursor of thymidine nucleotides and it decreases the intracellular concentration of dUTP so that uracil cannot be incorporated into DNA. This is Deoxyuridine 5'-triphosphate nucleotidohydrolase from Enterobacter sp. (strain 638).